The sequence spans 228 residues: uncharacterized protein (228 aa).

6 helical membrane passes run 14-34, 53-73, 108-128, 148-168, 178-198, and 200-220; these read GWYI…MWLI, FLII…VLIV, GLTF…FFWL, AVKM…PIFF, TIIS…GFSI, and SVVY…YMAI.

The protein resides in the cell membrane. This is an uncharacterized protein from Bacillus subtilis (strain 168).